Consider the following 728-residue polypeptide: 1,4-alpha-glucan branching enzyme GlgB (728 aa).

Asp-405 (nucleophile) is an active-site residue. Glu-458 serves as the catalytic Proton donor.

It belongs to the glycosyl hydrolase 13 family. GlgB subfamily. As to quaternary structure, monomer.

The catalysed reaction is Transfers a segment of a (1-&gt;4)-alpha-D-glucan chain to a primary hydroxy group in a similar glucan chain.. It functions in the pathway glycan biosynthesis; glycogen biosynthesis. In terms of biological role, catalyzes the formation of the alpha-1,6-glucosidic linkages in glycogen by scission of a 1,4-alpha-linked oligosaccharide from growing alpha-1,4-glucan chains and the subsequent attachment of the oligosaccharide to the alpha-1,6 position. The polypeptide is 1,4-alpha-glucan branching enzyme GlgB (Shigella flexneri).